The following is a 56-amino-acid chain: Cecropin-A2 (56 aa).

Position 55 is an arginine amide (R55).

This sequence belongs to the cecropin family.

Its subcellular location is the secreted. Cecropins have lytic and antibacterial activity against several Gram-positive and Gram-negative bacteria. The protein is Cecropin-A2 (CecA2) of Drosophila yakuba (Fruit fly).